The primary structure comprises 1756 residues: RANBP2-like and GRIP domain-containing protein 2 (1756 aa).

Ser21 is subject to Phosphoserine. 3 TPR repeats span residues 59–92 (PRAH…NPPQ), 583–616 (QKMG…LKII), and 647–680 (EDAH…VSYW). The segment at 759–804 (GPLYKNGSLRNADSEIKHSTPSPTKYSLSPSKSYKYSPKTPPRWAE) is disordered. Positions 777–796 (STPSPTKYSLSPSKSYKYSP) are enriched in low complexity. One can recognise a RanBD1 1 domain in the interval 1029 to 1165 (HFEPVVQMPE…FEECQRLLLD (137 aa)). Disordered stretches follow at residues 1206 to 1241 (TKVT…TLEW) and 1299 to 1324 (AKLN…ERDG). Positions 1228–1237 (IKPNPENTGP) are enriched in polar residues. Residues 1310–1322 (TDEESDVTQEEER) show a composition bias toward acidic residues. A RanBD1 2 domain is found at 1326–1462 (YFEPVVPLPD…FDEAKTAQEK (137 aa)). Residues 1573–1586 (NDSETSSVAQSGSE) show a composition bias toward polar residues. Positions 1573–1614 (NDSETSSVAQSGSESKVEPKKCELSKNSDIEQSSDSKVKNLS) are disordered. Residues 1587-1610 (SKVEPKKCELSKNSDIEQSSDSKV) show a composition bias toward basic and acidic residues. The 51-residue stretch at 1693 to 1743 (QEESAANVEHLKNVLLQFIFLKPGSERESLLPVINTMLQLSPEEKGKLAAV) folds into the GRIP domain.

In Homo sapiens (Human), this protein is RANBP2-like and GRIP domain-containing protein 2 (RGPD2).